A 373-amino-acid polypeptide reads, in one-letter code: MSGLHRSSSSSKNIGNCLPSKELLDDLCSRFVLNVPEEDQQSFERILFLVEYAYWYYEDNAVENDPKLKSLSLKEFTSLLFNSCDVLRPYVTHIDDIFKDFTSYKCRVPVTGAIILDETYERCLLVKGWKGSSWSFPRGKKSKDEEDHACAIREVLEETGFDVSKLLKREEYIEFVFRQQRVRLYIVAGVTEDTVFAPLTKKEISEITWHRLDHLQPASNEVITHGVSGLKLYMVAPFLSSLKSWILKHPSPVARRPNKPLKALCVWNARTSVGGNGTATVESQNRKSELRTTTMESNSRKPELKRTTMESHSTKPELRKGTMESHNTTATVESHNTKPVVDHSQDIKPGGSFINFKFNQSVILQALESGNSA.

Positions 106–234 (CRVPVTGAII…HGVSGLKLYM (129 aa)) constitute a Nudix hydrolase domain. Positions 139–160 (GKKSKDEEDHACAIREVLEETG) match the Nudix box motif. Mg(2+) contacts are provided by glutamate 154 and glutamate 158. The ATP site is built by arginine 178 and tyrosine 233. The interval 233–250 (YMVAPFLSSLKSWILKHP) is RNA binding. The segment at 275–342 (GNGTATVESQ…ESHNTKPVVD (68 aa)) is disordered. The segment covering 298 to 323 (NSRKPELKRTTMESHSTKPELRKGTM) has biased composition (basic and acidic residues). Residues 324 to 334 (ESHNTTATVES) show a composition bias toward polar residues. The PDZ-binding motif lies at 370–373 (GNSA).

It belongs to the Nudix hydrolase family. DCP2 subfamily. Homodimer. Catalytic component of the decapping complex. Interacts with DCP1, DCP5 and VCS. The cofactor is Mn(2+). Mg(2+) serves as cofactor. As to expression, expressed in seedlings, mostly in root tips, root hairs, and the vascular system. Also present in roots, leaves, stems, and flowers.

Its subcellular location is the cytoplasm. The protein resides in the P-body. The catalysed reaction is a 5'-end (N(7)-methyl 5'-triphosphoguanosine)-ribonucleoside in mRNA + H2O = N(7)-methyl-GDP + a 5'-end phospho-ribonucleoside in mRNA + 2 H(+). Its activity is regulated as follows. Inhibited by the product 7-methyl GDP. Catalytic component of the decapping complex necessary for the degradation of mRNAs, both in normal mRNA turnover and in nonsense-mediated mRNA decay. Removes the 7-methyl guanine cap structure from mRNA molecules, yielding a 5'-phosphorylated mRNA fragment and 7m-GDP. Essential for postembryonic development, especially during the formation of the shoot apical meristem (SAM). The chain is mRNA-decapping enzyme subunit 2 (DCP2) from Arabidopsis thaliana (Mouse-ear cress).